Reading from the N-terminus, the 303-residue chain is N-acetyl-D-glucosamine kinase (303 aa).

Residues 4–11 and 133–140 each bind ATP; these read GFDIGGTK and GVGGGLVL. 4 residues coordinate Zn(2+): His157, Cys177, Cys179, and Cys184.

Belongs to the ROK (NagC/XylR) family. NagK subfamily.

The catalysed reaction is N-acetyl-D-glucosamine + ATP = N-acetyl-D-glucosamine 6-phosphate + ADP + H(+). The protein operates within cell wall biogenesis; peptidoglycan recycling. In terms of biological role, catalyzes the phosphorylation of N-acetyl-D-glucosamine (GlcNAc) derived from cell-wall degradation, yielding GlcNAc-6-P. The chain is N-acetyl-D-glucosamine kinase from Salmonella paratyphi B (strain ATCC BAA-1250 / SPB7).